Here is a 147-residue protein sequence, read N- to C-terminus: Small ribosomal subunit protein bS6 (147 aa).

Positions 103 to 147 (AARMAANLPSFPEDEDTEEKGSAPLAREEEGIGEEAQTDEAEDKE) are disordered. The span at 133–147 (GIGEEAQTDEAEDKE) shows a compositional bias: acidic residues.

It belongs to the bacterial ribosomal protein bS6 family.

Functionally, binds together with bS18 to 16S ribosomal RNA. This chain is Small ribosomal subunit protein bS6, found in Syntrophobacter fumaroxidans (strain DSM 10017 / MPOB).